A 410-amino-acid chain; its full sequence is F-box/WD repeat-containing protein 4 (410 aa).

Residues 23–69 (GPALWRLPEELLLLICSYLDTRALGRLAQVCRWLRRFTSCDLLWRPI) enclose the F-box domain. WD repeat units lie at residues 159 to 196 (GHDE…TVKY), 198 to 235 (AHEQ…LGQC), 289 to 327 (PPGA…RKCV), and 333 to 372 (PHDS…CLHA).

As to quaternary structure, part of a SCF (SKP1-cullin-F-box) protein ligase complex. Interacts with POUF51.

In terms of biological role, probably recognizes and binds to some phosphorylated proteins and promotes their ubiquitination and degradation. Likely to be involved in key signaling pathways crucial for normal limb development. May participate in Wnt signaling. In Mus musculus (Mouse), this protein is F-box/WD repeat-containing protein 4 (Fbxw4).